The chain runs to 802 residues: Spondin-1 (802 aa).

The N-terminal stretch at M1–G23 is a signal peptide. A Reelin domain is found at F24 to K189. Cystine bridges form between C39–C123, C151–C177, C194–C331, C195–C335, C197–C410, C438–C475, C449–C484, C454–C489, C497–C533, C508–C512, C543–C549, C554–C590, C565–C569, C600–C605, C610–C645, C621–C625, and C655–C660. Positions P190–P383 constitute a Spondin domain. N209 carries an N-linked (GlcNAc...) asparagine glycan. Ca(2+) contacts are provided by D320, D349, and D353. TSP type-1 domains are found at residues T437 to S490, T496 to S550, S553 to H606, P609 to P661, D663 to L716, and V749 to P801. The N-linked (GlcNAc...) asparagine glycan is linked to N676.

It is found in the secreted. Its subcellular location is the extracellular space. The protein resides in the extracellular matrix. Functionally, cell adhesion protein that promotes the attachment of spinal cord and sensory neuron cells and the outgrowth of neurites in vitro. May contribute to the growth and guidance of axons in both the spinal cord and the PNS. Somite-derived spondin 1 is an inhibitory signal involved in patterning the segmental migration of neural crest cells and their topographical segregation within the rostral somites in vitro. May be required to prevent the lateral drifting of the commissural axons after having crossed the floor plate. The protein is Spondin-1 (SPON1) of Gallus gallus (Chicken).